A 142-amino-acid chain; its full sequence is Large ribosomal subunit protein uL13 (142 aa).

Belongs to the universal ribosomal protein uL13 family. Part of the 50S ribosomal subunit.

In terms of biological role, this protein is one of the early assembly proteins of the 50S ribosomal subunit, although it is not seen to bind rRNA by itself. It is important during the early stages of 50S assembly. The polypeptide is Large ribosomal subunit protein uL13 (Pyrococcus furiosus (strain ATCC 43587 / DSM 3638 / JCM 8422 / Vc1)).